A 179-amino-acid chain; its full sequence is Repressor of phase 1 flagellin gene (179 aa).

Functionally, transcriptional repressor of the FliC phase-1 flagellin. In Salmonella abortus-equi, this protein is Repressor of phase 1 flagellin gene (fljA).